We begin with the raw amino-acid sequence, 276 residues long: Putative inactive ferrous iron permease EfeU (276 aa).

Residue M1 is a topological domain, periplasmic. The chain crosses the membrane as a helical span at residues 2–22 (FVPFLIMLREGLEAALIVSLI). The Cytoplasmic portion of the chain corresponds to 23–35 (ASYLKRTQRGMXD). Residues 36–56 (CVMWIGVLLAAALCLGLGIFI) form a helical membrane-spanning segment. Topologically, residues 57 to 69 (NETTGEFPQKEQE) are periplasmic. Residues 70 to 90 (LFEGIVAVIAVVILTWMVFWM) form a helical membrane-spanning segment. Over 91 to 118 (RKVSRNVKVQLEQAVDSALQRGNHHGWA) the chain is Cytoplasmic. The helical transmembrane segment at 119–139 (LVMMVFFAVAREGLESVFFLL) threads the bilayer. The Periplasmic segment spans residues 140–147 (AAFQQDVG). A helical membrane pass occupies residues 148 to 168 (IWPPLGAMLGLATAVVLGFLL). Residues 169–179 (YWGGIRLNLGA) are Cytoplasmic-facing. A helical transmembrane segment spans residues 180–200 (FFKWTSLFILFVAAGLAAGAI). The Periplasmic segment spans residues 201 to 244 (RAFHEAGLWNHFQEIAFDMSAVLSTHSLFGTLMEGIFGYQEAPS). A helical membrane pass occupies residues 245–265 (VSEVAVWFIYLIPALVAFALP). The Cytoplasmic portion of the chain corresponds to 266–276 (PRAGATASRSA).

It belongs to the oxidase-dependent Fe transporter (OFeT) (TC 9.A.10.1) family. Part of a ferrous iron transporter composed of EfeU, EfeO and EfeB. However, this EfeUOB tripartite iron transporter is defective in E.coli strain K12 due to a frameshift mutation in EfeU.

It localises to the cell inner membrane. The sequence is that of Putative inactive ferrous iron permease EfeU (efeU) from Escherichia coli (strain K12).